A 768-amino-acid chain; its full sequence is Protein STRUBBELIG (768 aa).

An N-terminal signal peptide occupies residues 1–24; it reads MSFTRWEVFFGLSVLALTMPFSAG. At 25–341 the chain is on the extracellular side; it reads VTNLRDVSAI…GSGKFWSTQR (317 aa). A disulfide bridge links cysteine 57 with cysteine 66. An N-linked (GlcNAc...) asparagine glycan is attached at asparagine 70. 6 LRR repeats span residues 94-115, 116-139, 140-162, 164-186, 188-210, and 211-231; these read SIQV…ALPS, SIRN…SFLS, DLSE…FQQL, KLTK…MGDL, SLKI…EDLF, and LTDL…NLLK. Asparagine 119 is a glycosylation site (N-linked (GlcNAc...) asparagine). Residues 241 to 334 form a disordered region; the sequence is PFNTSIITPP…ISPPSGSGSG (94 aa). An N-linked (GlcNAc...) asparagine glycan is attached at asparagine 243. Pro residues-rich tracts occupy residues 248–283 and 291–301; these read TPPP…PFAP and QHPPPSPPLVW. The segment covering 315-334 has biased composition (polar residues); it reads NSVSGQPTLQISPPSGSGSG. A helical transmembrane segment spans residues 342–362; that stretch reads IILVVSSVAIIVLVSGLCVTL. Residues 363–768 lie on the Cytoplasmic side of the membrane; sequence WRCCRSKIYN…EIVQDLQHMI (406 aa). The disordered stretch occupies residues 385-477; that stretch reads PYFNKPPSQP…RAAHFPPGLN (93 aa). A compositionally biased stretch (polar residues) spans 439-464; that stretch reads SYYNKDVNTPQKPLQQPPRQFQSNDT. The Protein kinase domain occupies 497 to 768; the sequence is FSEENIIGEG…EIVQDLQHMI (272 aa). ATP is bound by residues 503–511 and lysine 525; that span reads IGEGSIGNV.

Belongs to the protein kinase superfamily. Ser/Thr protein kinase family. Interacts (via intra-cellular domain) with AN; this interaction is not required for correct subcellular localization and recycling of SUB. Binds to QKY and POQ at the plasma membrane. Binds to QKY at plasmodesmata (PD) in root epidermal cells to promote tissue morphogenesis. Expressed in leaves, stems, inflorescences, flower buds and developing root epidermis.

The protein localises to the cell membrane. It localises to the cell junction. Its subcellular location is the plasmodesma. Its activity is regulated as follows. Regulated at the post-transcriptional level. Regulates the expression of transcription factors that define the cell fates. Acts in a non-cell-autonomous fashion, functions in a radial inside-out signaling process, and mediates cell morphogenesis and cell fate across clonally distinct cell layers in floral primordia, developing ovules, and root meristems. Seems to be required for the regulation of cell shape and the orientation of the mitotic division plane. Involved in root hair specification, in the formation of the outer integument and the shape of organs such as carpels and petals and is necessary for the shape and height of the stem. Non-functional SUB proteins are retained in the endoplasmic reticulum and degraded by endoplasmic reticulum-associated degradation (ERAD). Collaboratively with QKY and POQ, regulates cell growth anisotropy during gynoecium development, thus linking together cell-cell communication and cellular growth. Together with QKY, links RLK-dependent signal transduction and intercellular communication mediated by plasmodesmata (PD) to regulate tissue morphogenesis. The protein is Protein STRUBBELIG of Arabidopsis thaliana (Mouse-ear cress).